Reading from the N-terminus, the 424-residue chain is Serine--tRNA ligase (424 aa).

231 to 233 serves as a coordination point for L-serine; that stretch reads TAE. 262 to 264 lines the ATP pocket; that stretch reads RSE. L-serine is bound at residue E285. 349–352 contributes to the ATP binding site; that stretch reads EISS. Position 385 (S385) interacts with L-serine.

It belongs to the class-II aminoacyl-tRNA synthetase family. Type-1 seryl-tRNA synthetase subfamily. Homodimer. The tRNA molecule binds across the dimer.

The protein resides in the cytoplasm. It carries out the reaction tRNA(Ser) + L-serine + ATP = L-seryl-tRNA(Ser) + AMP + diphosphate + H(+). The catalysed reaction is tRNA(Sec) + L-serine + ATP = L-seryl-tRNA(Sec) + AMP + diphosphate + H(+). It functions in the pathway aminoacyl-tRNA biosynthesis; selenocysteinyl-tRNA(Sec) biosynthesis; L-seryl-tRNA(Sec) from L-serine and tRNA(Sec): step 1/1. Functionally, catalyzes the attachment of serine to tRNA(Ser). Is also able to aminoacylate tRNA(Sec) with serine, to form the misacylated tRNA L-seryl-tRNA(Sec), which will be further converted into selenocysteinyl-tRNA(Sec). The chain is Serine--tRNA ligase from Bacillus cereus (strain B4264).